Reading from the N-terminus, the 424-residue chain is Phosphomethylpyrimidine synthase (424 aa).

Substrate contacts are provided by residues Met-94, Tyr-123, His-162, 184 to 186 (SRG), 225 to 228 (NGMR), and Glu-264. Residue His-268 coordinates Zn(2+). Substrate is bound at residue Tyr-291. His-332 contributes to the Zn(2+) binding site. [4Fe-4S] cluster contacts are provided by Cys-406, Cys-409, and Cys-413.

Belongs to the ThiC family. Requires [4Fe-4S] cluster as cofactor.

The enzyme catalyses 5-amino-1-(5-phospho-beta-D-ribosyl)imidazole + S-adenosyl-L-methionine = 4-amino-2-methyl-5-(phosphooxymethyl)pyrimidine + CO + 5'-deoxyadenosine + formate + L-methionine + 3 H(+). It participates in cofactor biosynthesis; thiamine diphosphate biosynthesis. In terms of biological role, catalyzes the synthesis of the hydroxymethylpyrimidine phosphate (HMP-P) moiety of thiamine from aminoimidazole ribotide (AIR) in a radical S-adenosyl-L-methionine (SAM)-dependent reaction. In Methanosphaerula palustris (strain ATCC BAA-1556 / DSM 19958 / E1-9c), this protein is Phosphomethylpyrimidine synthase.